Reading from the N-terminus, the 331-residue chain is DNA-directed RNA polymerase subunit alpha (331 aa).

Residues 1–230 (MKNIKTSPYI…KQMSVFNSEW (230 aa)) form an alpha N-terminal domain (alpha-NTD) region. The segment at 247-331 (LKPLLQKIEA…ALQKRLNKLK (85 aa)) is alpha C-terminal domain (alpha-CTD).

It belongs to the RNA polymerase alpha chain family. In terms of assembly, homodimer. The RNAP catalytic core consists of 2 alpha, 1 beta/beta' and 1 omega subunit. When a sigma factor is associated with the core the holoenzyme is formed, which can initiate transcription.

It catalyses the reaction RNA(n) + a ribonucleoside 5'-triphosphate = RNA(n+1) + diphosphate. In terms of biological role, DNA-dependent RNA polymerase catalyzes the transcription of DNA into RNA using the four ribonucleoside triphosphates as substrates. The protein is DNA-directed RNA polymerase subunit alpha of Wolinella succinogenes (strain ATCC 29543 / DSM 1740 / CCUG 13145 / JCM 31913 / LMG 7466 / NCTC 11488 / FDC 602W) (Vibrio succinogenes).